Consider the following 1133-residue polypeptide: Nuclear pore complex-interacting protein family member B5 (1133 aa).

Residues 60 to 84 (WLHVIIAFPTSYKVVITLWIVYLWV) form a helical membrane-spanning segment. 3 disordered regions span residues 241 to 262 (NRMG…NSLS), 290 to 575 (LTPL…IKTP), and 868 to 1133 (ERLR…RRLS). Residues 252–262 (QQHSITDNSLS) are compositionally biased toward polar residues. Over residues 349–359 (PLPPSALPSAP) the composition is skewed to pro residues. Composition is skewed to basic and acidic residues over residues 406–416 (DNIKTPAERLR), 448–458 (DNIKTPAERLR), 490–500 (DNIKTPAERLR), 528–538 (DNIKTPAERLR), 903–913 (DNIKTPAERLR), 945–955 (DNIKTPAERLR), and 987–997 (DNIKTPAERLR).

The protein belongs to the NPIP family.

Its subcellular location is the membrane. The protein is Nuclear pore complex-interacting protein family member B5 (NPIPB5) of Homo sapiens (Human).